A 340-amino-acid polypeptide reads, in one-letter code: Anthranilate phosphoribosyltransferase (340 aa).

5-phospho-alpha-D-ribose 1-diphosphate-binding positions include glycine 79, 82 to 83 (GD), serine 87, 89 to 92 (NIST), 107 to 115 (KHGNRSVSS), and serine 119. An anthranilate-binding site is contributed by glycine 79. Residue serine 91 participates in Mg(2+) binding. Asparagine 110 serves as a coordination point for anthranilate. Anthranilate is bound at residue arginine 165. Mg(2+) is bound by residues aspartate 224 and glutamate 225.

This sequence belongs to the anthranilate phosphoribosyltransferase family. Homodimer. The cofactor is Mg(2+).

It catalyses the reaction N-(5-phospho-beta-D-ribosyl)anthranilate + diphosphate = 5-phospho-alpha-D-ribose 1-diphosphate + anthranilate. It participates in amino-acid biosynthesis; L-tryptophan biosynthesis; L-tryptophan from chorismate: step 2/5. Catalyzes the transfer of the phosphoribosyl group of 5-phosphorylribose-1-pyrophosphate (PRPP) to anthranilate to yield N-(5'-phosphoribosyl)-anthranilate (PRA). This Oceanobacillus iheyensis (strain DSM 14371 / CIP 107618 / JCM 11309 / KCTC 3954 / HTE831) protein is Anthranilate phosphoribosyltransferase.